The chain runs to 161 residues: Cyclic pyranopterin monophosphate synthase (161 aa).

Residues 75–77 (MCH) and 115–116 (ME) contribute to the substrate site. D130 is an active-site residue.

Belongs to the MoaC family. As to quaternary structure, homohexamer; trimer of dimers.

The enzyme catalyses (8S)-3',8-cyclo-7,8-dihydroguanosine 5'-triphosphate = cyclic pyranopterin phosphate + diphosphate. Its pathway is cofactor biosynthesis; molybdopterin biosynthesis. Functionally, catalyzes the conversion of (8S)-3',8-cyclo-7,8-dihydroguanosine 5'-triphosphate to cyclic pyranopterin monophosphate (cPMP). This chain is Cyclic pyranopterin monophosphate synthase, found in Bacillus cereus (strain 03BB102).